The primary structure comprises 231 residues: Equistatin (231 aa).

A signal peptide spans 1–32 (MALSQNQAKFSKGFVVMIWVLFIACAITSTEA). 3 Thyroglobulin type-1 domains span residues 34 to 95 (LTKC…SPDC), 102 to 163 (LTLC…RPTC), and 167 to 231 (LSEC…RPTC). 9 disulfides stabilise this stretch: cysteine 37-cysteine 56, cysteine 67-cysteine 74, cysteine 76-cysteine 95, cysteine 105-cysteine 124, cysteine 135-cysteine 142, cysteine 144-cysteine 163, cysteine 170-cysteine 191, cysteine 202-cysteine 209, and cysteine 211-cysteine 231.

It belongs to the protease inhibitor I31 family.

It localises to the secreted. Its function is as follows. Potent inhibitor of papain-like cysteine proteinases (Ki=0.18-0.57 nM on papain), as well as of the aspartic proteinase cathepsin D (Ki=0.3-05 nM). This is Equistatin from Actinia equina (Beadlet anemone).